The following is a 206-amino-acid chain: Protein GrpE (206 aa).

The tract at residues 1-36 (MTDSNGPKDNNQDQAQAAADPVVSKPYIMPDDPEDG) is disordered.

Belongs to the GrpE family. Homodimer.

It is found in the cytoplasm. Functionally, participates actively in the response to hyperosmotic and heat shock by preventing the aggregation of stress-denatured proteins, in association with DnaK and GrpE. It is the nucleotide exchange factor for DnaK and may function as a thermosensor. Unfolded proteins bind initially to DnaJ; upon interaction with the DnaJ-bound protein, DnaK hydrolyzes its bound ATP, resulting in the formation of a stable complex. GrpE releases ADP from DnaK; ATP binding to DnaK triggers the release of the substrate protein, thus completing the reaction cycle. Several rounds of ATP-dependent interactions between DnaJ, DnaK and GrpE are required for fully efficient folding. The protein is Protein GrpE of Rhodopseudomonas palustris (strain HaA2).